The following is a 454-amino-acid chain: Natural cytotoxicity triggering receptor 3 ligand 1 (454 aa).

The N-terminal stretch at 1–24 is a signal peptide; that stretch reads MTWRAAASTCAALLILLWALTTEG. At 25-262 the chain is on the extracellular side; that stretch reads DLKVEMMAGG…SETEKTDNFS (238 aa). Residues 27–138 enclose the Ig-like V-type domain; that stretch reads KVEMMAGGTQ…LKAQGTVQLE (112 aa). Asn-43 and Asn-57 each carry an N-linked (GlcNAc...) asparagine glycan. An intrachain disulfide couples Cys-48 to Cys-122. Interaction with NCR3 stretches follow at residues 59 to 62 and 127 to 130; these read TSMG and TPLK. The region spanning 143–244 is the Ig-like C1-type domain; the sequence is PASRLLLDQV…LHTPLRSNFT (102 aa). The cysteines at positions 163 and 228 are disulfide-linked. 5 N-linked (GlcNAc...) asparagine glycosylation sites follow: Asn-174, Asn-208, Asn-216, Asn-242, and Asn-260. Residues 263 to 283 traverse the membrane as a helical segment; that stretch reads IHWWPISFIGVGLVLLIVLIP. Topologically, residues 284 to 454 are cytoplasmic; the sequence is WKKICNKSSS…QPPTLLLPLQ (171 aa). A retroviral-Gag-like region spans residues 291–429; that stretch reads SSSAYTPLKC…APILPVSPIW (139 aa). The segment at 395–454 is disordered; the sequence is GKSIDDNSTKSEKQTPREHSDAVPDAPILPVSPIWEPPPATTSTTPVLSSQPPTLLLPLQ. Positions 397-416 are enriched in basic and acidic residues; it reads SIDDNSTKSEKQTPREHSDA. Residues 435 to 454 show a composition bias toward low complexity; that stretch reads TTSTTPVLSSQPPTLLLPLQ.

As to quaternary structure, monomer. Interacts specifically with NCR3, but not with other natural killer cell-activating receptors, including NCR1, NCR2 and KLRK1. As to expression, not detected in any normal tissue tested. Expressed at the surface of several tumor cell lines including T and B-lymphomas, myeloid leukemias, melanomas, carcinomas and large T SV40 antigen-transformed cells (at protein level).

Its subcellular location is the cell membrane. Its function is as follows. Triggers NCR3-dependent natural killer cell activation. This Homo sapiens (Human) protein is Natural cytotoxicity triggering receptor 3 ligand 1 (NCR3LG1).